Here is a 479-residue protein sequence, read N- to C-terminus: MNFETIIGLEVHVELKTNSKIFSPAPAHFGEDPNANTNIVDWSFPGVLPVMNKGVIDYGIKAALALNMDIHQRMHFDRKNYFYPDNPKAYQISQFDEPIGYNGWIEIELEDGSTKKIRIERAHLEEDAGKNTHGADGYSYVDLNRQGVPLIEIVSEADMRSPEEAYAYLTALKEIIQYTGISDVKMEEGSMRVDANISIRPYGQEAFGVKTELKNLNSFNFVRRGLAYEEKRQAEVLRSGGQIQQETRRYDEATGETLLMRVKEGSADYRYFPEPDLPIFEIEDEWIEKVRAELPAFPKERRAKYVNDLGLSAYDAAQLTSSKAISDFFESALAQGADAKAVSNWLQGDVAQYLNTENQTIDQIGLTPENLTEMLQLVADGTISSKIAKKVFVHLAKNGGSAKEYVKSAGLIQISDPAQLLPIIQEVFANNEKALNDYKGGNKNAAKSLVGQIMKATRGQANPQVAQKLLNEELAKLTD.

Belongs to the GatB/GatE family. GatB subfamily. As to quaternary structure, heterotrimer of A, B and C subunits.

It carries out the reaction L-glutamyl-tRNA(Gln) + L-glutamine + ATP + H2O = L-glutaminyl-tRNA(Gln) + L-glutamate + ADP + phosphate + H(+). It catalyses the reaction L-aspartyl-tRNA(Asn) + L-glutamine + ATP + H2O = L-asparaginyl-tRNA(Asn) + L-glutamate + ADP + phosphate + 2 H(+). Its function is as follows. Allows the formation of correctly charged Asn-tRNA(Asn) or Gln-tRNA(Gln) through the transamidation of misacylated Asp-tRNA(Asn) or Glu-tRNA(Gln) in organisms which lack either or both of asparaginyl-tRNA or glutaminyl-tRNA synthetases. The reaction takes place in the presence of glutamine and ATP through an activated phospho-Asp-tRNA(Asn) or phospho-Glu-tRNA(Gln). This is Aspartyl/glutamyl-tRNA(Asn/Gln) amidotransferase subunit B from Streptococcus mutans serotype c (strain ATCC 700610 / UA159).